A 261-amino-acid chain; its full sequence is Putative hydro-lyase VSAL_I1435 (261 aa).

This sequence belongs to the D-glutamate cyclase family.

This is Putative hydro-lyase VSAL_I1435 from Aliivibrio salmonicida (strain LFI1238) (Vibrio salmonicida (strain LFI1238)).